A 482-amino-acid chain; its full sequence is Immune evasion protein OPG047 (482 aa).

The BTB domain maps to 20 to 90 (KKFKTIIEAI…SYTGKVYIDS (71 aa)). The 98-residue stretch at 125-222 (CIECYMMGIE…SNYLSPRGIH (98 aa)) folds into the BACK domain. 5 Kelch repeats span residues 273–319 (VVYL…PANN), 320–363 (KLYV…SINN), 365–408 (IYVM…VFGR), 410–447 (LFLV…IVDN), and 448–482 (KLLL…GMEW).

Belongs to the orthopoxvirus OPG047 family.

Might have a role in the suppression of host immune response. This chain is Immune evasion protein OPG047 (OPG047), found in Cynomys gunnisoni (Gunnison's prairie dog).